The sequence spans 188 residues: Threonylcarbamoyl-AMP synthase (188 aa).

A YrdC-like domain is found at 3–188 (QLQPSAVATT…RSGQILRNGS (186 aa)).

The protein belongs to the SUA5 family. TsaC subfamily.

Its subcellular location is the cytoplasm. It catalyses the reaction L-threonine + hydrogencarbonate + ATP = L-threonylcarbamoyladenylate + diphosphate + H2O. Its function is as follows. Required for the formation of a threonylcarbamoyl group on adenosine at position 37 (t(6)A37) in tRNAs that read codons beginning with adenine. Catalyzes the conversion of L-threonine, HCO(3)(-)/CO(2) and ATP to give threonylcarbamoyl-AMP (TC-AMP) as the acyladenylate intermediate, with the release of diphosphate. In Shewanella frigidimarina (strain NCIMB 400), this protein is Threonylcarbamoyl-AMP synthase.